Consider the following 335-residue polypeptide: MVREGEERIGNRVLLGVIGVSYRETTLQQREQVLHILQQAQGSFRPEVFQEERDYVLLATCHRVELYSVAPAELFDSLAQEIKLLGVSPYFYRNQDCFAHLFCVAGGLDSLVLGETEIQGQVKRAYLQAAREQKLSFALHFLFQKALKEGKVFRAKGGAPYAAITIPILVDQELRRRQIDKKASLLFIGYSEINRSVAYHLRRQGFSCITFCSRQQLPTLSMRQVVREELCFQDPYRVVFLGSLELQYALPHSLWESIWDIPDRIVFDFAVPRALPSHTVFPHRYMDMDQISDWLREHRKEVNSAHLDSLREVAYRYWNSLNQRLERHDCVGANA.

Residues 60–63 (TCHR), Ser110, 115–117 (ETE), and Gln121 contribute to the substrate site. Cys61 functions as the Nucleophile in the catalytic mechanism. 189–194 (GYSEIN) is a binding site for NADP(+).

This sequence belongs to the glutamyl-tRNA reductase family. Homodimer.

It carries out the reaction (S)-4-amino-5-oxopentanoate + tRNA(Glu) + NADP(+) = L-glutamyl-tRNA(Glu) + NADPH + H(+). Its pathway is porphyrin-containing compound metabolism; protoporphyrin-IX biosynthesis; 5-aminolevulinate from L-glutamyl-tRNA(Glu): step 1/2. In terms of biological role, catalyzes the NADPH-dependent reduction of glutamyl-tRNA(Glu) to glutamate 1-semialdehyde (GSA). The chain is Glutamyl-tRNA reductase from Chlamydia trachomatis serovar L2 (strain ATCC VR-902B / DSM 19102 / 434/Bu).